Consider the following 290-residue polypeptide: Release factor glutamine methyltransferase (290 aa).

S-adenosyl-L-methionine contacts are provided by D140 and N181. Position 181 to 184 (181 to 184) interacts with substrate; it reads NPPY.

It belongs to the protein N5-glutamine methyltransferase family. PrmC subfamily.

The catalysed reaction is L-glutaminyl-[peptide chain release factor] + S-adenosyl-L-methionine = N(5)-methyl-L-glutaminyl-[peptide chain release factor] + S-adenosyl-L-homocysteine + H(+). Functionally, methylates the class 1 translation termination release factors RF1/PrfA and RF2/PrfB on the glutamine residue of the universally conserved GGQ motif. The chain is Release factor glutamine methyltransferase from Chlamydia trachomatis serovar D (strain ATCC VR-885 / DSM 19411 / UW-3/Cx).